Reading from the N-terminus, the 577-residue chain is Probable ATP-dependent RNA helicase DDX55 homolog (577 aa).

The Q motif signature appears at 7–37 (AVATKTYREKLGPEILEVFDKSYKSFTDVQV). Positions 40-218 (GTHLLNLSDV…VFGLRNAKQV (179 aa)) constitute a Helicase ATP-binding domain. Residue 53–60 (SPTGSGKT) coordinates ATP. The DEAD box signature appears at 166-169 (DEAD). Residues 231–393 (TLKNYFVECP…EVKVPTSTSR (163 aa)) form the Helicase C-terminal domain. The disordered stretch occupies residues 508–577 (AKEKKRREKE…LSKKEIKDVL (70 aa)). Residues 510–530 (EKKRREKEARKMKRAGGRFKS) are compositionally biased toward basic residues.

This sequence belongs to the DEAD box helicase family. DDX55/SPB4 subfamily.

It catalyses the reaction ATP + H2O = ADP + phosphate + H(+). Functionally, probable ATP-binding RNA helicase. The chain is Probable ATP-dependent RNA helicase DDX55 homolog from Caenorhabditis briggsae.